A 425-amino-acid chain; its full sequence is Nicotinate dehydrogenase large molybdopterin subunit (425 aa).

Residues Gln-208 and 238 to 240 contribute to the Se-Mo-molybdopterin cytosine dinucleotide site; that span reads GFG.

Belongs to the xanthine dehydrogenase family. As to quaternary structure, heterooctamer of NDHM, NDHL, NDHS and NDHF. Dimer of heterotetramers. It depends on Se-Mo-molybdopterin cytosine dinucleotide as a cofactor.

The catalysed reaction is nicotinate + NADP(+) + H2O = 6-hydroxynicotinate + NADPH + H(+). It participates in cofactor degradation; nicotinate degradation; 6-hydroxynicotinate from nicotinate: step 1/1. With respect to regulation, reversibly inactivated by selenide and sulfide. Not inhibited by cyanide. Its function is as follows. Catalyzes the hydroxylation of nicotinate to 6-hydroxynicotinate. Also active against 2-pyrazinecarboxylic acid, but inactive against other nicotinate analogs. This chain is Nicotinate dehydrogenase large molybdopterin subunit (ndhL), found in Eubacterium barkeri (Clostridium barkeri).